An 839-amino-acid chain; its full sequence is Probable beta-glucosidase I (839 aa).

The N-linked (GlcNAc...) asparagine glycan is linked to asparagine 197. Aspartate 225 is an active-site residue. In terms of domain architecture, PA14 spans aspartate 396–valine 556. Asparagine 494 carries an N-linked (GlcNAc...) asparagine glycan.

Belongs to the glycosyl hydrolase 3 family.

The protein localises to the secreted. The enzyme catalyses Hydrolysis of terminal, non-reducing beta-D-glucosyl residues with release of beta-D-glucose.. It functions in the pathway glycan metabolism; cellulose degradation. In terms of biological role, beta-glucosidases are one of a number of cellulolytic enzymes, and catalyze the last step releasing glucose from the inhibitory cellobiose. The protein is Probable beta-glucosidase I (bglI) of Emericella nidulans (strain FGSC A4 / ATCC 38163 / CBS 112.46 / NRRL 194 / M139) (Aspergillus nidulans).